The following is an 81-amino-acid chain: Protein Vpu (81 aa).

Residues 1 to 6 (MQPIQI) are Extracellular-facing. The chain crosses the membrane as a helical span at residues 7–27 (AIAALVVAIIIAIVVWSIVII). The Cytoplasmic portion of the chain corresponds to 28 to 81 (EYRKILRQRKIDRLIDRLIERAEDSGNESEGEISALVEMGVEMGHHAPWDIDDL). Phosphoserine; by host CK2 occurs at positions 52 and 56.

This sequence belongs to the HIV-1 VPU protein family. Homopentamer. Interacts with host CD4 and BRTC; these interactions induce proteasomal degradation of CD4. Interacts with host BST2; this interaction leads to the degradation of host BST2. Interacts with host FBXW11. Interacts with host AP1M1; this interaction plays a role in the mistrafficking and subsequent degradation of host BST2. Interacts with host RANBP2; this interaction allows Vpu to down-regulate host BLM sumoylation. Phosphorylated by host CK2. This phosphorylation is necessary for interaction with human BTRC and degradation of CD4.

The protein localises to the host membrane. Ion channel activity is inhibited by hexamethylene amiloride in vitro. Functionally, enhances virion budding by targeting host CD4 and Tetherin/BST2 to proteasome degradation. Degradation of CD4 prevents any unwanted premature interactions between viral Env and its host receptor CD4 in the endoplasmic reticulum. Degradation of antiretroviral protein Tetherin/BST2 is important for virion budding, as BST2 tethers new viral particles to the host cell membrane. Mechanistically, Vpu bridges either CD4 or BST2 to BTRC, a substrate recognition subunit of the Skp1/Cullin/F-box protein E3 ubiquitin ligase, induces their ubiquitination and subsequent proteasomal degradation. The alteration of the E3 ligase specificity by Vpu seems to promote the degradation of host IKBKB, leading to NF-kappa-B down-regulation and subsequent apoptosis. Acts as a viroporin that forms an oligomeric ion channel in membranes. Modulates the host DNA repair mechanisms to promote degradation of nuclear viral cDNA in cells that are already productively infected in order to suppress immune sensing and proviral hyper-integration (superinfection). Manipulates PML-NBs and modulates SUMOylation of host BLM protein thereby enhancing its DNA-end processing activity toward viral unintegrated linear DNA. Also inhibits RAD52-mediated homologous repair of viral cDNA, preventing the generation of dead-end circular forms of single copies of the long terminal repeat and permitting sustained nucleolytic attack. This is Protein Vpu from Homo sapiens (Human).